The following is a 1039-amino-acid chain: Translation initiation factor IF-2 (1039 aa).

2 disordered regions span residues Thr39–Glu347 and Ala400–Val452. The span at Arg103–Asn125 shows a compositional bias: polar residues. Positions Pro157–Lys176 are enriched in low complexity. Composition is skewed to basic and acidic residues over residues Ala178–Pro197 and Pro226–Lys243. The span at Ala408–Thr423 shows a compositional bias: low complexity. Residues Asn432–Lys451 show a composition bias toward basic and acidic residues. Residues Arg533 to Ser706 form the tr-type G domain. A G1 region spans residues Gly542–Thr549. Gly542–Thr549 lines the GTP pocket. Residues Gly567–His571 are G2. A G3 region spans residues Asp592–Gly595. Residues Asp592–His596 and Asn646–Asp649 each bind GTP. Residues Asn646–Asp649 are G4. A G5 region spans residues Ser682–Ile684.

Belongs to the TRAFAC class translation factor GTPase superfamily. Classic translation factor GTPase family. IF-2 subfamily.

Its subcellular location is the cytoplasm. Functionally, one of the essential components for the initiation of protein synthesis. Protects formylmethionyl-tRNA from spontaneous hydrolysis and promotes its binding to the 30S ribosomal subunits. Also involved in the hydrolysis of GTP during the formation of the 70S ribosomal complex. The chain is Translation initiation factor IF-2 from Nostoc sp. (strain PCC 7120 / SAG 25.82 / UTEX 2576).